Reading from the N-terminus, the 89-residue chain is uncharacterized protein (89 aa).

The next 3 membrane-spanning stretches (helical) occupy residues 5 to 25 (AYLVLINLCGFWVMGIDKRKA), 36 to 56 (RLWLIAIVFGALGVWLGMQTF), and 67 to 87 (YGVPLLLVIEAILIAIYYSPF).

Its subcellular location is the cell membrane. This is an uncharacterized protein from Bacillus subtilis (strain 168).